Reading from the N-terminus, the 128-residue chain is Ribonuclease P protein component (128 aa).

The protein belongs to the RnpA family. In terms of assembly, consists of a catalytic RNA component (M1 or rnpB) and a protein subunit.

It carries out the reaction Endonucleolytic cleavage of RNA, removing 5'-extranucleotides from tRNA precursor.. In terms of biological role, RNaseP catalyzes the removal of the 5'-leader sequence from pre-tRNA to produce the mature 5'-terminus. It can also cleave other RNA substrates such as 4.5S RNA. The protein component plays an auxiliary but essential role in vivo by binding to the 5'-leader sequence and broadening the substrate specificity of the ribozyme. This is Ribonuclease P protein component from Prochlorococcus marinus (strain MIT 9301).